A 320-amino-acid chain; its full sequence is Ferrochelatase (320 aa).

Fe cation is bound by residues His194 and Glu275.

This sequence belongs to the ferrochelatase family.

It is found in the cytoplasm. It catalyses the reaction heme b + 2 H(+) = protoporphyrin IX + Fe(2+). It participates in porphyrin-containing compound metabolism; protoheme biosynthesis; protoheme from protoporphyrin-IX: step 1/1. In terms of biological role, catalyzes the ferrous insertion into protoporphyrin IX. In Stenotrophomonas maltophilia (strain R551-3), this protein is Ferrochelatase.